We begin with the raw amino-acid sequence, 125 residues long: Small ribosomal subunit protein bS6 (125 aa).

The tract at residues 94–125 (KAETGASSMMKTVEREEARKASQAEFAASNER) is disordered. Basic and acidic residues predominate over residues 105–115 (TVEREEARKAS).

This sequence belongs to the bacterial ribosomal protein bS6 family.

In terms of biological role, binds together with bS18 to 16S ribosomal RNA. In Acidovorax ebreus (strain TPSY) (Diaphorobacter sp. (strain TPSY)), this protein is Small ribosomal subunit protein bS6.